The following is a 208-amino-acid chain: FMN-dependent NADH:quinone oxidoreductase 1 (208 aa).

17–19 (SVS) lines the FMN pocket.

Belongs to the azoreductase type 1 family. Homodimer. Requires FMN as cofactor.

It carries out the reaction 2 a quinone + NADH + H(+) = 2 a 1,4-benzosemiquinone + NAD(+). It catalyses the reaction N,N-dimethyl-1,4-phenylenediamine + anthranilate + 2 NAD(+) = 2-(4-dimethylaminophenyl)diazenylbenzoate + 2 NADH + 2 H(+). Quinone reductase that provides resistance to thiol-specific stress caused by electrophilic quinones. Functionally, also exhibits azoreductase activity. Catalyzes the reductive cleavage of the azo bond in aromatic azo compounds to the corresponding amines. This Listeria monocytogenes serovar 1/2a (strain ATCC BAA-679 / EGD-e) protein is FMN-dependent NADH:quinone oxidoreductase 1.